We begin with the raw amino-acid sequence, 220 residues long: 7-cyano-7-deazaguanine synthase (220 aa).

10-20 provides a ligand contact to ATP; that stretch reads FSGGQDSTTCL. Zn(2+) contacts are provided by Cys-186, Cys-195, Cys-198, and Cys-201.

It belongs to the QueC family. As to quaternary structure, homodimer. Zn(2+) serves as cofactor.

The enzyme catalyses 7-carboxy-7-deazaguanine + NH4(+) + ATP = 7-cyano-7-deazaguanine + ADP + phosphate + H2O + H(+). It participates in purine metabolism; 7-cyano-7-deazaguanine biosynthesis. Its function is as follows. Catalyzes the ATP-dependent conversion of 7-carboxy-7-deazaguanine (CDG) to 7-cyano-7-deazaguanine (preQ(0)). This chain is 7-cyano-7-deazaguanine synthase, found in Bacillus cereus (strain ATCC 14579 / DSM 31 / CCUG 7414 / JCM 2152 / NBRC 15305 / NCIMB 9373 / NCTC 2599 / NRRL B-3711).